Reading from the N-terminus, the 219-residue chain is Large ribosomal subunit protein bL25 (219 aa).

A disordered region spans residues 176-219 (VTVVPPTDEPSEEEVEAMEGESATEEPEVVDEDKEDDEEENKED). Residues 184–219 (EPSEEEVEAMEGESATEEPEVVDEDKEDDEEENKED) are compositionally biased toward acidic residues.

It belongs to the bacterial ribosomal protein bL25 family. CTC subfamily. As to quaternary structure, part of the 50S ribosomal subunit; part of the 5S rRNA/L5/L18/L25 subcomplex. Contacts the 5S rRNA. Binds to the 5S rRNA independently of L5 and L18.

Functionally, this is one of the proteins that binds to the 5S RNA in the ribosome where it forms part of the central protuberance. The protein is Large ribosomal subunit protein bL25 of Staphylococcus epidermidis (strain ATCC 12228 / FDA PCI 1200).